The chain runs to 212 residues: MSNIDLSASSNLNVENTLVPMVVEQTARGERSYDIYSRLLKERVIFLVGQVEDHMANLVVAQMLFLEAENPDKDIHLYINSPGGSVTAGLSIYDTMQFIKPDVSTMCIGQACSMGAFLLTAGAKGKRFCLPNARTMIHQPSGGAQGQASDIHIQAQEILKLRERLNEIMAGHTGRGVEEIARDTERDRFMSAHESVEYGLIDKVLERRVGGE.

S113 acts as the Nucleophile in catalysis. H138 is a catalytic residue.

Belongs to the peptidase S14 family. Fourteen ClpP subunits assemble into 2 heptameric rings which stack back to back to give a disk-like structure with a central cavity, resembling the structure of eukaryotic proteasomes.

Its subcellular location is the cytoplasm. The enzyme catalyses Hydrolysis of proteins to small peptides in the presence of ATP and magnesium. alpha-casein is the usual test substrate. In the absence of ATP, only oligopeptides shorter than five residues are hydrolyzed (such as succinyl-Leu-Tyr-|-NHMec, and Leu-Tyr-Leu-|-Tyr-Trp, in which cleavage of the -Tyr-|-Leu- and -Tyr-|-Trp bonds also occurs).. Its function is as follows. Cleaves peptides in various proteins in a process that requires ATP hydrolysis. Has a chymotrypsin-like activity. Plays a major role in the degradation of misfolded proteins. The polypeptide is ATP-dependent Clp protease proteolytic subunit (Saccharophagus degradans (strain 2-40 / ATCC 43961 / DSM 17024)).